The primary structure comprises 204 residues: ATP phosphoribosyltransferase (204 aa).

It belongs to the ATP phosphoribosyltransferase family. Short subfamily. As to quaternary structure, heteromultimer composed of HisG and HisZ subunits.

The protein localises to the cytoplasm. It catalyses the reaction 1-(5-phospho-beta-D-ribosyl)-ATP + diphosphate = 5-phospho-alpha-D-ribose 1-diphosphate + ATP. The protein operates within amino-acid biosynthesis; L-histidine biosynthesis; L-histidine from 5-phospho-alpha-D-ribose 1-diphosphate: step 1/9. Its function is as follows. Catalyzes the condensation of ATP and 5-phosphoribose 1-diphosphate to form N'-(5'-phosphoribosyl)-ATP (PR-ATP). Has a crucial role in the pathway because the rate of histidine biosynthesis seems to be controlled primarily by regulation of HisG enzymatic activity. This is ATP phosphoribosyltransferase from Staphylococcus epidermidis (strain ATCC 35984 / DSM 28319 / BCRC 17069 / CCUG 31568 / BM 3577 / RP62A).